Here is a 232-residue protein sequence, read N- to C-terminus: Large ribosomal subunit protein uL1 (232 aa).

It belongs to the universal ribosomal protein uL1 family. Part of the 50S ribosomal subunit.

Binds directly to 23S rRNA. The L1 stalk is quite mobile in the ribosome, and is involved in E site tRNA release. In terms of biological role, protein L1 is also a translational repressor protein, it controls the translation of the L11 operon by binding to its mRNA. The protein is Large ribosomal subunit protein uL1 of Thermosipho melanesiensis (strain DSM 12029 / CIP 104789 / BI429).